The chain runs to 538 residues: Myeloid cell nuclear differentiation antigen-like protein (538 aa).

One can recognise a Pyrin domain in the interval 1–87; the sequence is MAEYKKIVLL…AKKLKTEKAK (87 aa). The segment at 120–306 is disordered; that stretch reads SYKSVPSSKK…PQPQNQNIPR (187 aa). Composition is skewed to basic and acidic residues over residues 135–153 and 245–262; these read AKTE…DHLP and RREE…KEPD. Over residues 276–305 the composition is skewed to low complexity; it reads SPILHSSSSASSNIPSATNQKPQPQNQNIP. The 201-residue stretch at 299–499 folds into the HIN-200 domain; it reads PQNQNIPRGA…CGDHSFVKIK (201 aa).

The protein belongs to the HIN-200 family. Highest expression observed in spleen and thymus with moderate levels in bone marrow, lung, skin and heart, low levels in muscle, liver and intestine and little or no expression in brain and pancreas.

It localises to the nucleus. Suppresses cell growth when expressed ectopically. The polypeptide is Myeloid cell nuclear differentiation antigen-like protein (Mus musculus (Mouse)).